A 295-amino-acid chain; its full sequence is Phosphatidylserine decarboxylase proenzyme (295 aa).

Catalysis depends on charge relay system; for autoendoproteolytic cleavage activity residues aspartate 113, histidine 169, and serine 256. Catalysis depends on serine 256, which acts as the Schiff-base intermediate with substrate; via pyruvic acid; for decarboxylase activity. At serine 256 the chain carries Pyruvic acid (Ser); by autocatalysis.

This sequence belongs to the phosphatidylserine decarboxylase family. PSD-B subfamily. Prokaryotic type II sub-subfamily. Heterodimer of a large membrane-associated beta subunit and a small pyruvoyl-containing alpha subunit. It depends on pyruvate as a cofactor. In terms of processing, is synthesized initially as an inactive proenzyme. Formation of the active enzyme involves a self-maturation process in which the active site pyruvoyl group is generated from an internal serine residue via an autocatalytic post-translational modification. Two non-identical subunits are generated from the proenzyme in this reaction, and the pyruvate is formed at the N-terminus of the alpha chain, which is derived from the carboxyl end of the proenzyme. The autoendoproteolytic cleavage occurs by a canonical serine protease mechanism, in which the side chain hydroxyl group of the serine supplies its oxygen atom to form the C-terminus of the beta chain, while the remainder of the serine residue undergoes an oxidative deamination to produce ammonia and the pyruvoyl prosthetic group on the alpha chain. During this reaction, the Ser that is part of the protease active site of the proenzyme becomes the pyruvoyl prosthetic group, which constitutes an essential element of the active site of the mature decarboxylase.

Its subcellular location is the cell membrane. It carries out the reaction a 1,2-diacyl-sn-glycero-3-phospho-L-serine + H(+) = a 1,2-diacyl-sn-glycero-3-phosphoethanolamine + CO2. The protein operates within phospholipid metabolism; phosphatidylethanolamine biosynthesis; phosphatidylethanolamine from CDP-diacylglycerol: step 2/2. Functionally, catalyzes the formation of phosphatidylethanolamine (PtdEtn) from phosphatidylserine (PtdSer). This chain is Phosphatidylserine decarboxylase proenzyme, found in Clostridium botulinum (strain 657 / Type Ba4).